The sequence spans 464 residues: Probable glycosyltransferase Saci_1499 (464 aa).

The next 6 membrane-spanning stretches (helical) occupy residues 6 to 26, 300 to 320, 337 to 357, 373 to 393, 416 to 436, and 439 to 459; these read IFLNLLLFVYPAVFIIYQIIL, LIIYLLQYTPVIVTFFISTLL, ALLFWLVSLGLYASLLLSLAL, LTAFTVSISPFIVFNFFKGLL, IIAIIGVFGLLYLLSSILYIY, and YYVTGIWLLYYSSAYLYTMLL.

Belongs to the glycosyltransferase 2 family.

It localises to the cell membrane. Functionally, probably part of a 4-gene DNA damage response locus in which the upstream ups system, in combination with this downstream locus, functions in homologous recombination to rescue Sulfolobales from DNA-damaging threats. The chain is Probable glycosyltransferase Saci_1499 from Sulfolobus acidocaldarius (strain ATCC 33909 / DSM 639 / JCM 8929 / NBRC 15157 / NCIMB 11770).